The sequence spans 1770 residues: Transposon Ty2-DR3 Gag-Pol polyprotein (1770 aa).

Composition is skewed to polar residues over residues 1 to 11 (MESQQLHQNPH), 19 to 39 (ASVTSKEVPSNQDPLAVSASN), 49 to 60 (KVNSQQETTPGT), 366 to 390 (VSRTSPNTTNTKVTSRNYHRTNSSK), 399 to 408 (IATSSKFSRV), and 415 to 435 (ESTVSSQYLSDDNELSLGQQQ). Disordered regions lie at residues 1–89 (MESQ…QQHG) and 355–449 (SQYK…SNDE). The interval 295–397 (ENNINVSDRL…SSKPRAAKAH (103 aa)) is RNA-binding. D457 (for protease activity; shared with dimeric partner) is an active-site residue. Residues 579–636 (NVNKSKSVNKYPYPLIHRMLGHANFRSIQKSLKKNAVTYLKESDIEWSNASTYQCPDC) are integrase-type zinc finger-like. Positions 656–831 (ESYEPFQYLH…AGLDITTILP (176 aa)) constitute an Integrase catalytic domain. Mg(2+)-binding residues include D667 and D732. 2 disordered regions span residues 1005–1038 (GGTIESDTTSPRHSSTFTARNQKRPGSPNDMIDL) and 1057–1205 (GGTE…TEIE). Composition is skewed to polar residues over residues 1009–1024 (ESDTTSPRHSSTFTAR) and 1065–1082 (QRNSDTNIKYRTTNSTPS). The short motif at 1193–1227 (KKRSLEDNETEIEVSRDTWNNKNMRSLEPPRSKKR) is the Bipartite nuclear localization signal element. Positions 1353–1491 (NDYYITQLDI…DILGLEIKYQ (139 aa)) constitute a Reverse transcriptase Ty1/copia-type domain. Mg(2+)-binding residues include D1361, D1442, D1443, D1625, E1667, and D1700. The RNase H Ty1/copia-type domain maps to 1625–1767 (DASYGNQPYY…IKTFKLLTNK (143 aa)).

As to quaternary structure, the capsid protein forms a homotrimer, from which the VLPs are assembled. The protease is a homodimer, whose active site consists of two apposed aspartic acid residues. In terms of processing, initially, virus-like particles (VLPs) are composed of the structural unprocessed proteins Gag and Gag-Pol, and also contain the host initiator methionine tRNA (tRNA(i)-Met) which serves as a primer for minus-strand DNA synthesis, and a dimer of genomic Ty RNA. Processing of the polyproteins occurs within the particle and proceeds by an ordered pathway, called maturation. First, the protease (PR) is released by autocatalytic cleavage of the Gag-Pol polyprotein, and this cleavage is a prerequisite for subsequent processing at the remaining sites to release the mature structural and catalytic proteins. Maturation takes place prior to the RT reaction and is required to produce transposition-competent VLPs.

The protein resides in the cytoplasm. It localises to the nucleus. The catalysed reaction is DNA(n) + a 2'-deoxyribonucleoside 5'-triphosphate = DNA(n+1) + diphosphate. It catalyses the reaction Endonucleolytic cleavage to 5'-phosphomonoester.. Functionally, capsid protein (CA) is the structural component of the virus-like particle (VLP), forming the shell that encapsulates the retrotransposons dimeric RNA genome. The particles are assembled from trimer-clustered units and there are holes in the capsid shells that allow for the diffusion of macromolecules. CA also has nucleocapsid-like chaperone activity, promoting primer tRNA(i)-Met annealing to the multipartite primer-binding site (PBS), dimerization of Ty2 RNA and initiation of reverse transcription. Its function is as follows. The aspartyl protease (PR) mediates the proteolytic cleavages of the Gag and Gag-Pol polyproteins after assembly of the VLP. Reverse transcriptase/ribonuclease H (RT) is a multifunctional enzyme that catalyzes the conversion of the retro-elements RNA genome into dsDNA within the VLP. The enzyme displays a DNA polymerase activity that can copy either DNA or RNA templates, and a ribonuclease H (RNase H) activity that cleaves the RNA strand of RNA-DNA heteroduplexes during plus-strand synthesis and hydrolyzes RNA primers. The conversion leads to a linear dsDNA copy of the retrotransposon that includes long terminal repeats (LTRs) at both ends. In terms of biological role, integrase (IN) targets the VLP to the nucleus, where a subparticle preintegration complex (PIC) containing at least integrase and the newly synthesized dsDNA copy of the retrotransposon must transit the nuclear membrane. Once in the nucleus, integrase performs the integration of the dsDNA into the host genome. This chain is Transposon Ty2-DR3 Gag-Pol polyprotein (TY2B-DR3), found in Saccharomyces cerevisiae (strain ATCC 204508 / S288c) (Baker's yeast).